Consider the following 206-residue polypeptide: Putative acetyltransferase OgpAT (206 aa).

Positions 5 to 205 constitute an N-acetyltransferase domain; the sequence is VVIRRATAAD…EVVVGRRLLD (201 aa). Acetyl-CoA-binding positions include 135–138, 144–148, 175–177, and His184; these read HIDL, GRGVG, and NPR.

This sequence belongs to the acetyltransferase family. In terms of assembly, monomer.

Binds acetyl-CoA, but not butyryl-CoA or decanoyl-CoA. May have acetyltransferase activity. In Oceanicola granulosus (strain ATCC BAA-861 / DSM 15982 / KCTC 12143 / HTCC2516), this protein is Putative acetyltransferase OgpAT.